Consider the following 248-residue polypeptide: Adenylate kinase isoenzyme 6 homolog HBR1 (248 aa).

Gly-19, Gly-21, Lys-22, Ser-23, and Ser-24 together coordinate ATP. The segment at 49 to 72 (NISEIAKERDCIESYDAKLDTSIV) is NMPbind. The segment at 124-134 (TRNYNDLKLQE) is LID. Position 125 (Arg-125) interacts with ATP. The tract at residues 188-248 (DGVSNELNKQ…EMEHTEDIAQ (61 aa)) is disordered. The span at 202–238 (DSSDEGDDNSDSDEYELEEDEQEEEEEREEYDEETNE) shows a compositional bias: acidic residues. Residues 239–248 (EMEHTEDIAQ) show a composition bias toward basic and acidic residues.

It belongs to the adenylate kinase family. AK6 subfamily. In terms of assembly, interacts with small ribosomal subunit protein uS11. Not a structural component of 43S pre-ribosomes, but transiently interacts with them by binding to uS11.

The protein localises to the cytoplasm. It localises to the nucleus. The catalysed reaction is AMP + ATP = 2 ADP. It carries out the reaction ATP + H2O = ADP + phosphate + H(+). Functionally, broad-specificity nucleoside monophosphate (NMP) kinase that catalyzes the reversible transfer of the terminal phosphate group between nucleoside triphosphates and monophosphates. Also has ATPase activity. Involved in the late cytoplasmic maturation steps of the 40S ribosomal particles, specifically 18S rRNA maturation. While NMP activity is not required for ribosome maturation, ATPase activity is. Associates transiently with small ribosomal subunit protein uS11. ATP hydrolysis breaks the interaction with uS11. May temporarily remove uS11 from the ribosome to enable a conformational change of the ribosomal RNA that is needed for the final maturation step of the small ribosomal subunit. Its NMP activity may have a role in nuclear energy homeostasis. Induces transcription of mating-type proteins ALPHA1 and ALPHA2 and moderately represses transcription of mating-type protein A1 in response to hemoglobin and growth signals. Involved in the induction of a high affinity fibronectin receptor by sub-inhibitory dosages of caspofungin. The protein is Adenylate kinase isoenzyme 6 homolog HBR1 (HBR1) of Candida albicans (strain SC5314 / ATCC MYA-2876) (Yeast).